Consider the following 335-residue polypeptide: Tryptophan--tRNA ligase (335 aa).

Residues 19–21 (QPS) and 28–29 (GN) contribute to the ATP site. Residues 20-29 (PSSGMLHLGN) carry the 'HIGH' region motif. Asp143 contributes to the L-tryptophan binding site. ATP-binding positions include 155–157 (GAD), Ile192, and 201–205 (KMSKS). The 'KMSKS' region motif lies at 201 to 205 (KMSKS).

The protein belongs to the class-I aminoacyl-tRNA synthetase family. As to quaternary structure, homodimer.

Its subcellular location is the cytoplasm. The enzyme catalyses tRNA(Trp) + L-tryptophan + ATP = L-tryptophyl-tRNA(Trp) + AMP + diphosphate + H(+). Its function is as follows. Catalyzes the attachment of tryptophan to tRNA(Trp). This Tropheryma whipplei (strain Twist) (Whipple's bacillus) protein is Tryptophan--tRNA ligase.